A 314-amino-acid polypeptide reads, in one-letter code: MEKIKQPVLVLVGPTAIGKTALSLQLARQFSCEVVSMDSMQVYRHMDIGTAKISKEEQGEVPHHLLDIVEPDEHYDASMYCRDALRTITEIHARGHIPLVTGGTGLYLQSLTKGFFEGPPSDSAVRERLQEELDNLGPEEMHARLEQLDPLSAQRLHPNDSYRVMRALEIFAITGKPWSQLLSQHKPENQFANMLQIGLTCDRPLLYDRINMRTQIMLDAGLEEEVRGLLDMGYSRELRSMGSIGYKHMANFIFGDWEFEEMKTLLARDTRRYAKRQYTWFNKDEDLHWYQKESKAEIVDRVGQWLEDQLSKNL.

Residue 13–20 (GPTAIGKT) participates in ATP binding. 15 to 20 (TAIGKT) provides a ligand contact to substrate. Positions 38-41 (DSMQ) are interaction with substrate tRNA.

The protein belongs to the IPP transferase family. Monomer. The cofactor is Mg(2+).

The enzyme catalyses adenosine(37) in tRNA + dimethylallyl diphosphate = N(6)-dimethylallyladenosine(37) in tRNA + diphosphate. Catalyzes the transfer of a dimethylallyl group onto the adenine at position 37 in tRNAs that read codons beginning with uridine, leading to the formation of N6-(dimethylallyl)adenosine (i(6)A). In Desulfotalea psychrophila (strain LSv54 / DSM 12343), this protein is tRNA dimethylallyltransferase.